The chain runs to 271 residues: Tryptophan synthase alpha chain (271 aa).

Active-site proton acceptor residues include Glu49 and Asp60.

It belongs to the TrpA family. As to quaternary structure, tetramer of two alpha and two beta chains.

It catalyses the reaction (1S,2R)-1-C-(indol-3-yl)glycerol 3-phosphate + L-serine = D-glyceraldehyde 3-phosphate + L-tryptophan + H2O. The protein operates within amino-acid biosynthesis; L-tryptophan biosynthesis; L-tryptophan from chorismate: step 5/5. In terms of biological role, the alpha subunit is responsible for the aldol cleavage of indoleglycerol phosphate to indole and glyceraldehyde 3-phosphate. This chain is Tryptophan synthase alpha chain, found in Burkholderia pseudomallei (strain K96243).